Here is a 207-residue protein sequence, read N- to C-terminus: ATP synthase subunit 5, mitochondrial (207 aa).

Belongs to the ATPase delta chain family. F-type ATPases have 2 components, CF(1) - the catalytic core - and CF(0) - the membrane proton channel. CF(1) has five subunits: alpha(3), beta(3), gamma(1), delta(1), epsilon(1). CF(0) has three main subunits: a, b and c.

It localises to the mitochondrion. The protein resides in the mitochondrion inner membrane. In terms of biological role, mitochondrial membrane ATP synthase (F(1)F(0) ATP synthase or Complex V) produces ATP from ADP in the presence of a proton gradient across the membrane which is generated by electron transport complexes of the respiratory chain. F-type ATPases consist of two structural domains, F(1) - containing the extramembraneous catalytic core and F(0) - containing the membrane proton channel, linked together by a central stalk and a peripheral stalk. During catalysis, ATP synthesis in the catalytic domain of F(1) is coupled via a rotary mechanism of the central stalk subunits to proton translocation. Part of the complex F(0) domain and the peripheric stalk, which acts as a stator to hold the catalytic alpha(3)beta(3) subcomplex and subunit a/ATP6 static relative to the rotary elements. The sequence is that of ATP synthase subunit 5, mitochondrial (ATP5) from Eremothecium gossypii (strain ATCC 10895 / CBS 109.51 / FGSC 9923 / NRRL Y-1056) (Yeast).